The primary structure comprises 171 residues: S-ribosylhomocysteine lyase (171 aa).

H54, H58, and C128 together coordinate Fe cation.

The protein belongs to the LuxS family. In terms of assembly, homodimer. The cofactor is Fe cation.

It carries out the reaction S-(5-deoxy-D-ribos-5-yl)-L-homocysteine = (S)-4,5-dihydroxypentane-2,3-dione + L-homocysteine. Its function is as follows. Involved in the synthesis of autoinducer 2 (AI-2) which is secreted by bacteria and is used to communicate both the cell density and the metabolic potential of the environment. The regulation of gene expression in response to changes in cell density is called quorum sensing. Catalyzes the transformation of S-ribosylhomocysteine (RHC) to homocysteine (HC) and 4,5-dihydroxy-2,3-pentadione (DPD). The chain is S-ribosylhomocysteine lyase from Salmonella typhi.